Reading from the N-terminus, the 310-residue chain is Olfactory receptor 2A25 (310 aa).

The Extracellular segment spans residues 1–24 (MGGNQTSITEFLLLGFPIGPRIQM). Residue Asn4 is glycosylated (N-linked (GlcNAc...) asparagine). The chain crosses the membrane as a helical span at residues 25–48 (LLFGLFSLFYIFILLGNGTILGLI). Over 49–56 (SLDSRLHT) the chain is Cytoplasmic. The helical transmembrane segment at 57 to 78 (PMYFFLSHLAVVDIACACSTVP) threads the bilayer. The Extracellular portion of the chain corresponds to 79–99 (QMLVNLLHPAKPISFAGCMTQ). Cys96 and Cys188 are oxidised to a cystine. Residues 100 to 119 (MFLFLSFAHTECLLLVVMSY) form a helical membrane-spanning segment. Over 120–138 (DRYVAICHPLRYSTIMTWK) the chain is Cytoplasmic. A helical membrane pass occupies residues 139-157 (VCITLALTSWILGVLLALV). At 158-195 (HLVLLLPLSFCGPQKLNHFFCEIMAVLKLACADTHINE) the chain is on the extracellular side. The chain crosses the membrane as a helical span at residues 196–218 (VMVLAGAVSVLVGAFFSTVISYV). Residues 219 to 235 (HILCAILKIQSGEGCQK) are Cytoplasmic-facing. The helical transmembrane segment at 236–258 (AFSICSSHLCVVGLFYGTAIIMY) threads the bilayer. Topologically, residues 259–271 (VEPQYESPKEQKK) are extracellular. The chain crosses the membrane as a helical span at residues 272–291 (YLLLFHSLFNPMLNPLIYSL). Over 292–310 (RNKEVQGTLKRMLEKKRTS) the chain is Cytoplasmic.

It belongs to the G-protein coupled receptor 1 family.

The protein resides in the cell membrane. Its function is as follows. Odorant receptor. This Homo sapiens (Human) protein is Olfactory receptor 2A25 (OR2A25).